The following is a 1825-amino-acid chain: Tail fiber protein (1825 aa).

Coiled coils occupy residues Val393–Glu466, Asp681–Val701, Lys843–Ala891, and Asp975–Ile998.

It localises to the virion. Structural protein, a component of a tail fiber. This chain is Tail fiber protein, found in Enterococcus faecalis (Streptococcus faecalis).